A 1427-amino-acid polypeptide reads, in one-letter code: Multidrug resistance-associated protein 5 (1427 aa).

The Cytoplasmic portion of the chain corresponds to 1-147 (MPSDSEEVCL…IYRFISTRLW (147 aa)). Residues 148–168 (FSCAVFFFCLIFGFIGPTCFI) traverse the membrane as a helical segment. Residues 151–432 (AVFFFCLIFG…IPYGSRYLAE (282 aa)) enclose the ABC transmembrane type-1 1 domain. The Extracellular portion of the chain corresponds to 169 to 185 (RRLIAFAENPERDEQSR). A helical transmembrane segment spans residues 186–206 (IVYSYGIALVAAISVVEFARV). The Cytoplasmic segment spans residues 207-268 (LSYGATWAVS…RLFDAVTFAP (62 aa)). Residues 269–289 (LVLVGPLVLVGGIGYLLMVIG) traverse the membrane as a helical segment. Arg290 is a topological domain (extracellular). Residues 291-311 (WSLLGILVFFVFDVIQFGLGK) form a helical membrane-spanning segment. At 312–375 (SMVACRNLAI…RKSGYAQSLA (64 aa)) the chain is on the cytoplasmic side. The chain crosses the membrane as a helical span at residues 376–396 (IACGPVVPVVAAILTFVGVVL). Residues 397 to 399 (AGN) are Extracellular-facing. The helical transmembrane segment at 400–420 (DLLASDAFSAITVYFVMLFGI) threads the bilayer. The Cytoplasmic portion of the chain corresponds to 421–770 (RMIPYGSRYL…TIAWRIYKQY (350 aa)). Residues 486–707 (PTENEVIVVE…NDAYKTFVDA (222 aa)) form the ABC transporter 1 domain. 518–525 (GAVGCGKS) is a binding site for ATP. Residues 771–791 (IHAAGGWPIWTCLVIGFIVNV) form a helical membrane-spanning segment. The region spanning 783–1078 (LVIGFIVNVV…AVRTQTELEA (296 aa)) is the ABC transmembrane type-1 2 domain. The Extracellular portion of the chain corresponds to 792–833 (VSNIFSTYWLSRWLKKGHDETTTITNGTEFLEMKTSLADSPV). Asn817 carries N-linked (GlcNAc...) asparagine glycosylation. Residues 834 to 854 (TGFYAAVYLVALVVLTISGLF) form a helical membrane-spanning segment. Topologically, residues 855 to 909 (KACVFVKVSLTAATRLHDRMFQAVIHGATSFFDSTPTGRILNRFSKDMDEIDVKL) are cytoplasmic. Residues 910–930 (PFTAEVFLQNMITCLGFLVVI) traverse the membrane as a helical segment. A topological domain (extracellular) is located at residue Thr931. Residues 932 to 952 (SVFPYFLLFAIPLFVVFVVFV) traverse the membrane as a helical segment. Over 953-1022 (SCFRAGIRNL…MFQSAMRWLA (70 aa)) the chain is Cytoplasmic. A helical membrane pass occupies residues 1023-1043 (VWLDLLVVVMTAIVALLTVML). Residues 1044–1049 (TGTVSP) are Extracellular-facing. Residues 1050–1070 (ADAGMAIAFAVQMSGIFQFAV) form a helical membrane-spanning segment. Topologically, residues 1071-1427 (RTQTELEAKM…SSDTDIEVVQ (357 aa)) are cytoplasmic. One can recognise an ABC transporter 2 domain in the interval 1117–1351 (INFSEVNLRY…DWSVYKLEDK (235 aa)). Position 1151–1158 (1151–1158 (GRTGSGKS)) interacts with ATP. Residues 1361–1427 (VGENSEHSME…SSDTDIEVVQ (67 aa)) form a disordered region. Basic and acidic residues predominate over residues 1382-1418 (DIVKVENEQKDSSDDVVHIESGDDDVKADSSEVKETS).

It belongs to the ABC transporter superfamily. ABCC family. Conjugate transporter (TC 3.A.1.208) subfamily. In terms of tissue distribution, highly expressed in the intestine and pharynx. Expressed at low levels in the hypodermis and in some neurons.

The protein resides in the basolateral cell membrane. Heme transporter required for the export of intestinal heme to different tissues and subcellular compartments. Also, required for the export of vitamin B12 from the intestine of the mother to the embryo to support embryonic development. This Caenorhabditis elegans protein is Multidrug resistance-associated protein 5.